The following is a 157-amino-acid chain: Oocyte zinc finger protein XlCOF2 (157 aa).

5 C2H2-type zinc fingers span residues 6–28 (FTCTECGKNFSFTTSFIRHMRIH), 34–56 (YSCADCGKHFSEKMYLQFHQKNP), 79–101 (FTCTECGKCFSLSSYLHRHQRLH), 107–129 (FSCAECGKAFSGKAQLQDHQNTH), and 135–157 (FTCTECGKCFTRKGSLQMHQKIH).

The protein belongs to the krueppel C2H2-type zinc-finger protein family.

The protein resides in the nucleus. Functionally, may be involved in transcriptional regulation. The protein is Oocyte zinc finger protein XlCOF2 of Xenopus laevis (African clawed frog).